Reading from the N-terminus, the 296-residue chain is Aquaporin PIP1-6 (296 aa).

Transmembrane regions (helical) follow at residues Ile-63–Val-83 and Ile-98–His-120. Positions Asn-122–Ala-124 match the NPA 1 motif. 3 helical membrane-spanning segments follow: residues Val-141–Phe-161, Gly-183–Ala-203, and Ala-217–Ile-237. The NPA 2 motif lies at Asn-243–Ala-245. Residues Ile-265–Leu-285 form a helical membrane-spanning segment.

The protein belongs to the MIP/aquaporin (TC 1.A.8) family. PIP (TC 1.A.8.11) subfamily.

The protein localises to the cell membrane. Aquaporins facilitate the transport of water and small neutral solutes across cell membranes. The protein is Aquaporin PIP1-6 (PIP1-6) of Zea mays (Maize).